Reading from the N-terminus, the 211-residue chain is uncharacterized protein (211 aa).

The next 4 membrane-spanning stretches (helical) occupy residues 77-97 (FLMF…AITI), 113-133 (GISV…VLIG), 152-172 (ILIS…NVIP), and 179-199 (LLTP…PLFG).

The protein resides in the cell membrane. This is an uncharacterized protein from Bacillus subtilis (strain 168).